We begin with the raw amino-acid sequence, 392 residues long: Branched-chain-amino-acid aminotransferase, mitochondrial (392 aa).

The N-terminal 27 residues, 1 to 27, are a transit peptide targeting the mitochondrion; that stretch reads MAAAALGQIWARKFLSVPWLLCGPRRY. A substrate-binding site is contributed by Tyr-168. Residue Lys-229 is modified to N6-(pyridoxal phosphate)lysine. Residue Lys-321 is modified to N6-acetyllysine.

Belongs to the class-IV pyridoxal-phosphate-dependent aminotransferase family. In terms of assembly, homodimer. It depends on pyridoxal 5'-phosphate as a cofactor.

The protein resides in the mitochondrion. The enzyme catalyses L-leucine + 2-oxoglutarate = 4-methyl-2-oxopentanoate + L-glutamate. It carries out the reaction L-isoleucine + 2-oxoglutarate = (S)-3-methyl-2-oxopentanoate + L-glutamate. The catalysed reaction is L-valine + 2-oxoglutarate = 3-methyl-2-oxobutanoate + L-glutamate. Functionally, catalyzes the first reaction in the catabolism of the essential branched chain amino acids leucine, isoleucine, and valine. May also function as a transporter of branched chain alpha-keto acids. The sequence is that of Branched-chain-amino-acid aminotransferase, mitochondrial (BCAT2) from Pongo abelii (Sumatran orangutan).